The following is a 240-amino-acid chain: MRIDVLTLFPEMFSIFNHSIIGRAIEKEILKINTVNIRDYTIDKHKKVDDYPYGGGAGMVMSVQPIVDSIKAVKKENKGKVIFLGPKGKTFNQNLAKELAKEEELIFLCGHYEGIDERAYEYIDMEISLGDFVLTGGEMACIPIVDSICRLVDGVLGSSESYEDESFYNGLLEYPQYTRPAIYEGKSVPEVLLSGHHENIKKWRKAKSLIITDKVRPDLFKKYKLTEEDKKILKDFNKKL.

S-adenosyl-L-methionine contacts are provided by residues Gly110 and 129–134 (LGDFVL).

Belongs to the RNA methyltransferase TrmD family. As to quaternary structure, homodimer.

Its subcellular location is the cytoplasm. It catalyses the reaction guanosine(37) in tRNA + S-adenosyl-L-methionine = N(1)-methylguanosine(37) in tRNA + S-adenosyl-L-homocysteine + H(+). Functionally, specifically methylates guanosine-37 in various tRNAs. This Clostridium botulinum (strain ATCC 19397 / Type A) protein is tRNA (guanine-N(1)-)-methyltransferase.